Here is a 693-residue protein sequence, read N- to C-terminus: Glycine--tRNA ligase beta subunit (693 aa).

Positions 65–74 (QPDKSVEKRG) are enriched in basic and acidic residues. The disordered stretch occupies residues 65-84 (QPDKSVEKRGPAVKAAFDDS).

It belongs to the class-II aminoacyl-tRNA synthetase family. In terms of assembly, tetramer of two alpha and two beta subunits.

It is found in the cytoplasm. It carries out the reaction tRNA(Gly) + glycine + ATP = glycyl-tRNA(Gly) + AMP + diphosphate. This is Glycine--tRNA ligase beta subunit from Marinobacter nauticus (strain ATCC 700491 / DSM 11845 / VT8) (Marinobacter aquaeolei).